A 381-amino-acid polypeptide reads, in one-letter code: MLLERLHKRLHAGSSRRSQENKDKNCKPEDALPIQPEAQHQTQDPQPLLNCDYDDMIAFDRNLSTPVFTPVMTPINNSSSNQAKSSDASYFPPYLNANRTRQNSASSLASSVSDFAQNFKQHTFYNNNAQFTSFTPQFVGLLLEVYQNTCSDPTITPFDTTNPPSGILNRVAKAAIQQSELQQLDIGCDRNSWLLTLVRQRLLQEVRKDGYLSRNTSLTSLPPPPPPQFSEMLRVPSPFVNADITDPIPLSNTNSNPNVSSTTSLTNTLNWYSLQRSNVSMKNRNGSSQYISELQPQPILARTNSNNSVSNSNAFSLLTPTPTTDSAFNFNIALLSRQRSNIISSPLASTRLPTANVSTEESSILPNESLKLKRDLLRLKR.

The segment covering 1–11 has biased composition (basic residues); that stretch reads MLLERLHKRLH. Positions 1–30 are disordered; sequence MLLERLHKRLHAGSSRRSQENKDKNCKPED. Residues 17 to 30 show a composition bias toward basic and acidic residues; sequence RSQENKDKNCKPED. 3 positions are modified to phosphothreonine: Thr65, Thr69, and Thr73.

In terms of assembly, interact with the CDC28/CLN2 complex. In terms of processing, phosphorylated during S phase in a CDC28-dependent manner. Phosphorylated at Thr-65 and Thr-73 by HOG1 under osmotic stress. The phosphorylations of Thr-65 and Thr-73 are necessary for CIP1-induced growth inhibition.

It is found in the cytoplasm. Its subcellular location is the nucleus. Acts as an inhibitor of the CDC28/CLN2 cyclin-dependent kinase complex. Stabilizes the CDC28 inhibitor SIC1. Negatively regulates the G1/S phase transition. Contributes to osmostress-induced transitory G1 delay. The protein is Cyclin-dependent kinase inhibitor CIP1 of Saccharomyces cerevisiae (strain ATCC 204508 / S288c) (Baker's yeast).